The chain runs to 1939 residues: Myosin-6 (1939 aa).

One can recognise a Myosin N-terminal SH3-like domain in the interval 32–81; sequence DIRTECFVPDDKEEFVKAKILSREGGKVIAETENGKTVTVKEDQVLQQNP. The Myosin motor domain occupies 85-780; it reads DKIEDMAMLT…LLGLLEEMRD (696 aa). An N6,N6,N6-trimethyllysine modification is found at Lys129. 178-185 contacts ATP; it reads GESGAGKT. Thr379 carries the post-translational modification Phosphothreonine. Phosphoserine is present on Ser417. Actin-binding stretches follow at residues 657–679 and 759–773; these read LNKLMTNLRTTHPHFVRCIIPNE and KFGHTKVFFKAGLLG. Positions 783–812 constitute an IQ domain; it reads LSRIITRMQAQARGQLMRIEFKKIVERRDA. Positions 842 to 1939 form a coiled coil; the sequence is LKSAETEKEM…GAKQKMHDEE (1098 aa). The residue at position 1139 (Ser1139) is a Phosphoserine. Residue Tyr1261 is modified to Phosphotyrosine. Ser1271 is modified (phosphoserine). Thr1277 and Thr1284 each carry phosphothreonine. Ser1309 carries the phosphoserine modification. Residue Tyr1310 is modified to Phosphotyrosine. Thr1311 carries the phosphothreonine modification. Ser1512 is subject to Phosphoserine. Phosphothreonine is present on Thr1515. Composition is skewed to basic and acidic residues over residues 1826–1837 and 1925–1939; these read GELEAEQKRNAE and KSRDIGAKQKMHDEE. 2 disordered regions span residues 1826–1849 and 1909–1939; these read GELEAEQKRNAESVKGMRKSERRI and EERADIAESQVNKLRAKSRDIGAKQKMHDEE.

Belongs to the TRAFAC class myosin-kinesin ATPase superfamily. Myosin family. Muscle myosin is a hexameric protein that consists of 2 heavy chain subunits (MHC), 2 alkali light chain subunits (MLC) and 2 regulatory light chain subunits (MLC-2).

Its subcellular location is the cytoplasm. It localises to the myofibril. Its function is as follows. Muscle contraction. The protein is Myosin-6 (MYH6) of Homo sapiens (Human).